Here is a 339-residue protein sequence, read N- to C-terminus: D-glycero-alpha-D-manno-heptose 7-phosphate kinase (339 aa).

17 to 20 (GGTD) serves as a coordination point for substrate. Residues Ser-57 and 110-116 (GSGLGGS) each bind ATP. The Mg(2+) site is built by Ser-116 and Glu-148. The active-site Proton acceptor is the Asp-160.

This sequence belongs to the GHMP kinase family.

It catalyses the reaction D-glycero-alpha-D-manno-heptose 7-phosphate + ATP = D-glycero-alpha-D-manno-heptose 1,7-bisphosphate + ADP + H(+). It functions in the pathway nucleotide-sugar biosynthesis; GDP-D-glycero-alpha-D-manno-heptose biosynthesis; GDP-D-glycero-alpha-D-manno-heptose from D-glycero-alpha-D-manno-heptose 7-phosphate: step 1/3. It participates in capsule biogenesis; capsule polysaccharide biosynthesis. Catalyzes the phosphorylation of D-glycero-alpha-D-manno-heptose 7-phosphate at the C-1 position to form D-glycero-alpha-D-manno-heptose 1,7-bisphosphate. This is D-glycero-alpha-D-manno-heptose 7-phosphate kinase from Campylobacter jejuni subsp. jejuni serotype O:2 (strain ATCC 700819 / NCTC 11168).